The sequence spans 162 residues: Early E1A 18 kDa protein (162 aa).

The segment at 134 to 162 is disordered; sequence EEPTEGVAENSLKRQADSSLCSSSPKRFC. Positions 150–162 are enriched in polar residues; sequence DSSLCSSSPKRFC.

The sequence is that of Early E1A 18 kDa protein from Tree shrew adenovirus serotype 1 (TSAdV-1).